The following is a 100-amino-acid chain: Integration host factor subunit beta (100 aa).

This sequence belongs to the bacterial histone-like protein family. In terms of assembly, heterodimer of an alpha and a beta chain.

This protein is one of the two subunits of integration host factor, a specific DNA-binding protein that functions in genetic recombination as well as in transcriptional and translational control. The protein is Integration host factor subunit beta of Agrobacterium fabrum (strain C58 / ATCC 33970) (Agrobacterium tumefaciens (strain C58)).